The primary structure comprises 133 residues: Ribosome-binding factor A (133 aa).

Belongs to the RbfA family. As to quaternary structure, monomer. Binds 30S ribosomal subunits, but not 50S ribosomal subunits or 70S ribosomes.

Its subcellular location is the cytoplasm. One of several proteins that assist in the late maturation steps of the functional core of the 30S ribosomal subunit. Associates with free 30S ribosomal subunits (but not with 30S subunits that are part of 70S ribosomes or polysomes). Required for efficient processing of 16S rRNA. May interact with the 5'-terminal helix region of 16S rRNA. This is Ribosome-binding factor A from Enterobacter sp. (strain 638).